Consider the following 358-residue polypeptide: DNA polymerase IV (358 aa).

Residues 4–185 enclose the UmuC domain; sequence IIHIDMDCYF…LSLRKIPGVG (182 aa). Positions 8 and 103 each coordinate Mg(2+). Residue Glu104 is part of the active site.

Belongs to the DNA polymerase type-Y family. Monomer. Mg(2+) serves as cofactor.

It is found in the cytoplasm. It carries out the reaction DNA(n) + a 2'-deoxyribonucleoside 5'-triphosphate = DNA(n+1) + diphosphate. Its function is as follows. Poorly processive, error-prone DNA polymerase involved in untargeted mutagenesis. Copies undamaged DNA at stalled replication forks, which arise in vivo from mismatched or misaligned primer ends. These misaligned primers can be extended by PolIV. Exhibits no 3'-5' exonuclease (proofreading) activity. May be involved in translesional synthesis, in conjunction with the beta clamp from PolIII. The polypeptide is DNA polymerase IV (Shewanella baltica (strain OS155 / ATCC BAA-1091)).